The primary structure comprises 517 residues: Crotonobetaine/carnitine--CoA ligase (517 aa).

The protein belongs to the ATP-dependent AMP-binding enzyme family.

It carries out the reaction 4-(trimethylamino)butanoate + ATP + CoA = 4-(trimethylamino)butanoyl-CoA + AMP + diphosphate. It catalyses the reaction crotonobetaine + ATP + CoA = crotonobetainyl-CoA + AMP + diphosphate. The catalysed reaction is (R)-carnitine + ATP + CoA = (R)-carnitinyl-CoA + AMP + diphosphate. It participates in amine and polyamine metabolism; carnitine metabolism. Catalyzes the transfer of CoA to carnitine, generating the initial carnitinyl-CoA needed for the CaiB reaction cycle. Also has activity toward crotonobetaine and gamma-butyrobetaine. In Salmonella paratyphi A (strain ATCC 9150 / SARB42), this protein is Crotonobetaine/carnitine--CoA ligase.